A 278-amino-acid chain; its full sequence is Large ribosomal subunit protein uL2 (278 aa).

Residues 201–278 (HGNINDGKAG…IMRSRHQRKK (78 aa)) are disordered. Positions 210-221 (GRSRWRGKRPHV) are enriched in basic residues.

This sequence belongs to the universal ribosomal protein uL2 family. Part of the 50S ribosomal subunit. Forms a bridge to the 30S subunit in the 70S ribosome.

Its function is as follows. One of the primary rRNA binding proteins. Required for association of the 30S and 50S subunits to form the 70S ribosome, for tRNA binding and peptide bond formation. It has been suggested to have peptidyltransferase activity; this is somewhat controversial. Makes several contacts with the 16S rRNA in the 70S ribosome. This chain is Large ribosomal subunit protein uL2, found in Rhizobium meliloti (strain 1021) (Ensifer meliloti).